The following is a 135-amino-acid chain: UPF0738 protein Aflv_2116 (135 aa).

This sequence belongs to the UPF0738 family.

This is UPF0738 protein Aflv_2116 from Anoxybacillus flavithermus (strain DSM 21510 / WK1).